The sequence spans 122 residues: Small ribosomal subunit protein uS13 (122 aa).

The disordered stretch occupies residues 97–122 (PVRGQRTHTNARTRKGPARAIAGKKK).

Belongs to the universal ribosomal protein uS13 family. In terms of assembly, part of the 30S ribosomal subunit. Forms a loose heterodimer with protein S19. Forms two bridges to the 50S subunit in the 70S ribosome.

Located at the top of the head of the 30S subunit, it contacts several helices of the 16S rRNA. In the 70S ribosome it contacts the 23S rRNA (bridge B1a) and protein L5 of the 50S subunit (bridge B1b), connecting the 2 subunits; these bridges are implicated in subunit movement. Contacts the tRNAs in the A and P-sites. In Bartonella bacilliformis (strain ATCC 35685 / KC583 / Herrer 020/F12,63), this protein is Small ribosomal subunit protein uS13.